The following is a 361-amino-acid chain: Myricetin 3-O-methyltransferase 3 (361 aa).

An S-adenosyl-L-methionine-binding site is contributed by D229. Catalysis depends on H267, which acts as the Proton acceptor.

This sequence belongs to the class I-like SAM-binding methyltransferase superfamily. Cation-independent O-methyltransferase family. Homodimer. In terms of tissue distribution, mainly expressed in leaves secreting glandular trichomes types 1 and 4 and, to a lesser extent, in storage trichomes type 6.

It catalyses the reaction kaempferol + S-adenosyl-L-methionine = 3-O-methylkaempferol + S-adenosyl-L-homocysteine + H(+). The catalysed reaction is quercetin + S-adenosyl-L-methionine = 3',4',5,7-tetrahydroxy-3-methoxyflavone + S-adenosyl-L-homocysteine + H(+). It carries out the reaction myricetin + S-adenosyl-L-methionine = 3-O-methylmyricetin + S-adenosyl-L-homocysteine + H(+). The enzyme catalyses kaempferide + S-adenosyl-L-methionine = 3,4'-O-dimethylkaempferol + S-adenosyl-L-homocysteine + H(+). It catalyses the reaction isorhamnetin + S-adenosyl-L-methionine = 3,3'-O-dimethylquercetin + S-adenosyl-L-homocysteine + H(+). The catalysed reaction is rhamnetin + S-adenosyl-L-methionine = 3',4',5-trihydroxy-3,7-dimethoxyflavone + S-adenosyl-L-homocysteine + H(+). It carries out the reaction laricitrin + S-adenosyl-L-methionine = 3,3'-O-dimethylmyricetin + S-adenosyl-L-homocysteine + H(+). The enzyme catalyses syringetin + S-adenosyl-L-methionine = 3,3',5'-O-trimethylmyricetin + S-adenosyl-L-homocysteine + H(+). The protein operates within flavonoid metabolism. Flavonoid 3-O-methyltransferase involved in the biosynthesis of polymethoxylated flavonoids natural products such as myricetin derivatives, aroma compounds possessing antioxidant properties and exhibiting pharmacological activities such as anti-carcinogen, anti-viral, anti-thrombotic, anti-diabetic, anti-atherosclerotic, and anti-inflammatory effects. Catalyzes S-adenosylmethionine-dependent regioselective 3-O-methylation of flavonoids; active on various hydroxylated flavonoid substrates. Active with myricetin, quercetin, kaempferol, 4'-methyl kaempferol (kaempferide), 3'-methyl quercetin (isorhamnetin), 7-methyl quercetin (rhamnetin), 3'-methyl myricetin (laricitrin) and 3',5'-dimethyl myricetin (syringetin), thus producing 3-methyl myricetin, 3-methyl quercetin, 3-methyl kaempferol, 4',3-methyl kaempferol, 3',3-methyl quercetin, 7,3-dimethyl quercetin, 3',3-dimethyl myricetin and 3',5',3-dimethyl myricetin, respectively. Inactive with flavonol substrates methylated at the 3-hydroxyl position such as 3-O-methyl quercetin. This Solanum habrochaites (Wild tomato) protein is Myricetin 3-O-methyltransferase 3.